The sequence spans 89 residues: Probable Fe(2+)-trafficking protein (89 aa).

Belongs to the Fe(2+)-trafficking protein family.

Functionally, could be a mediator in iron transactions between iron acquisition and iron-requiring processes, such as synthesis and/or repair of Fe-S clusters in biosynthetic enzymes. The chain is Probable Fe(2+)-trafficking protein from Acinetobacter baumannii (strain AB0057).